Consider the following 491-residue polypeptide: Putative F-box/LRR-repeat protein At3g59230 (491 aa).

The 47-residue stretch at 11-57 (KDIINSLPEALIYHILSFLSTKEAAITSLLSRKWRYFFAFVPNLDFD) folds into the F-box domain. LRR repeat units follow at residues 127–154 (LSIA…RIEA), 156–182 (NGLA…YLDS), 184–209 (ELDY…VMID), 325–351 (ASTV…TIES), 352–377 (NTKV…VFQG), 419–444 (NDKT…NIYY), and 472–491 (VQVI…SSSI).

The chain is Putative F-box/LRR-repeat protein At3g59230 from Arabidopsis thaliana (Mouse-ear cress).